A 219-amino-acid polypeptide reads, in one-letter code: Ribose-5-phosphate isomerase A (219 aa).

Substrate contacts are provided by residues 28–31 (TGST), 81–84 (DGAD), and 94–97 (KGGG). Residue Glu-103 is the Proton acceptor of the active site. Substrate is bound at residue Lys-121.

The protein belongs to the ribose 5-phosphate isomerase family. Homodimer.

It carries out the reaction aldehydo-D-ribose 5-phosphate = D-ribulose 5-phosphate. The protein operates within carbohydrate degradation; pentose phosphate pathway; D-ribose 5-phosphate from D-ribulose 5-phosphate (non-oxidative stage): step 1/1. Functionally, catalyzes the reversible conversion of ribose-5-phosphate to ribulose 5-phosphate. The polypeptide is Ribose-5-phosphate isomerase A (Erwinia tasmaniensis (strain DSM 17950 / CFBP 7177 / CIP 109463 / NCPPB 4357 / Et1/99)).